The primary structure comprises 149 residues: MVALKRFRATGPSFADLVPYAGLVDNGVLLLKDGSLMAGWYFAGPDSDSATDFERNELSRQINAILSRLGTGWMIQVEAARIPTYDYPSEDRCHFPDAVTRAIDAERRAHFARERGHFESKHALILTYRPSEAKKTAAQQIHLLGRGEP.

This sequence belongs to the TrbE/VirB4 family.

In Sinorhizobium fredii (strain NBRC 101917 / NGR234), this protein is Probable conjugal transfer protein TrbE part 1 (trbEA).